The following is a 192-amino-acid chain: Transcription termination/antitermination protein NusG (192 aa).

The KOW domain maps to V140 to L168.

The protein belongs to the NusG family.

Its function is as follows. Participates in transcription elongation, termination and antitermination. This is Transcription termination/antitermination protein NusG from Rickettsia typhi (strain ATCC VR-144 / Wilmington).